The chain runs to 134 residues: Large-conductance mechanosensitive channel (134 aa).

2 consecutive transmembrane segments (helical) span residues 16 to 36 (VVDM…VSSF) and 76 to 96 (GVFL…FIAV).

It belongs to the MscL family. In terms of assembly, homopentamer.

It is found in the cell inner membrane. Its function is as follows. Channel that opens in response to stretch forces in the membrane lipid bilayer. May participate in the regulation of osmotic pressure changes within the cell. The polypeptide is Large-conductance mechanosensitive channel (Thioalkalivibrio sulfidiphilus (strain HL-EbGR7)).